The primary structure comprises 129 residues: Lysozyme C (129 aa).

Positions 1 to 129 constitute a C-type lysozyme domain; that stretch reads KVYGRCELAA…VHAWIRGCRL (129 aa). Disulfide bonds link Cys-6–Cys-127, Cys-30–Cys-115, Cys-64–Cys-80, and Cys-76–Cys-94. Active-site residues include Glu-35 and Asp-52.

It belongs to the glycosyl hydrolase 22 family. In terms of assembly, monomer.

The protein localises to the secreted. It carries out the reaction Hydrolysis of (1-&gt;4)-beta-linkages between N-acetylmuramic acid and N-acetyl-D-glucosamine residues in a peptidoglycan and between N-acetyl-D-glucosamine residues in chitodextrins.. Functionally, lysozymes have primarily a bacteriolytic function; those in tissues and body fluids are associated with the monocyte-macrophage system and enhance the activity of immunoagents. This chain is Lysozyme C (LYZ), found in Tragopan temminckii (Temminck's tragopan).